The following is a 478-amino-acid chain: Muscarinic acetylcholine receptor M4 (478 aa).

Residues 1-30 (MXNFTPVNGSSANQSVRLVTAAHNHLETVE) lie on the Extracellular side of the membrane. N-linked (GlcNAc...) asparagine glycosylation is found at N8 and N13. A helical membrane pass occupies residues 31–53 (MVFIATVTGSLSLVTVVGNILVM). Over 54–67 (LSIKVNRQLQTVNN) the chain is Cytoplasmic. A helical transmembrane segment spans residues 68-88 (YFLFSLGCADLIIGAFSMNLY). Topologically, residues 89-105 (TLYIIKGYWPLGAVVCD) are extracellular. Cysteines 104 and 184 form a disulfide. A helical membrane pass occupies residues 106–127 (LWLALDYVVSNASVMNLLIISF). Residues 128 to 147 (DRYFCVTKPLTYPARRTTKM) lie on the Cytoplasmic side of the membrane. A helical transmembrane segment spans residues 148–170 (AGLMIAAAWVLSFVLWAPAILFW). The Extracellular portion of the chain corresponds to 171-192 (QFVVGKRTVPDNQCFIQFLSNP). The chain crosses the membrane as a helical span at residues 193–215 (AVTFGTAIAAFYLPVVIMTVLYI). The Cytoplasmic portion of the chain corresponds to 216–400 (HISLASRSRV…AARERKVTRT (185 aa)). A disordered region spans residues 271-333 (LEEAPPPALP…APTLQPRTLN (63 aa)). The segment covering 274–285 (APPPALPPPPRP) has biased composition (pro residues). The segment covering 293 to 303 (NESSSGSATQN) has biased composition (polar residues). Residues 310-332 (TELSTAEATTPALPAPTLQPRTL) show a composition bias toward low complexity. Residues 401 to 421 (IFAILLAFILTWTPYNVMVLV) form a helical membrane-spanning segment. Over 422-435 (NTFCQSCIPERVWS) the chain is Extracellular. Residues 436–455 (IGYWLCYVNSTINPACYALC) traverse the membrane as a helical segment. The Cytoplasmic portion of the chain corresponds to 456 to 478 (NATFKKTFRHLLLCQYRNIGTAR). T458, T462, and T476 each carry phosphothreonine.

The protein belongs to the G-protein coupled receptor 1 family. Muscarinic acetylcholine receptor subfamily. CHRM4 sub-subfamily.

The protein resides in the cell membrane. The protein localises to the postsynaptic cell membrane. Its function is as follows. The muscarinic acetylcholine receptor mediates various cellular responses, including inhibition of adenylate cyclase, breakdown of phosphoinositides and modulation of potassium channels through the action of G proteins. Primary transducing effect is inhibition of adenylate cyclase. The protein is Muscarinic acetylcholine receptor M4 (Chrm4) of Rattus norvegicus (Rat).